Reading from the N-terminus, the 196-residue chain is uncharacterized protein (196 aa).

It belongs to the NAD(P)H dehydrogenase (quinone) family.

This is an uncharacterized protein from Escherichia coli (strain K12).